Reading from the N-terminus, the 177-residue chain is Zinc metalloproteinase-disintegrin-like scutiarin (177 aa).

Residues 1 to 63 enclose the Disintegrin domain; it reads NPCCDAATCK…ECPADVFHKN (63 aa). Intrachain disulfides connect Cys-3–Cys-26, Cys-17–Cys-23, Cys-22–Cys-48, Cys-35–Cys-55, Cys-42–Cys-74, Cys-67–Cys-79, Cys-86–Cys-136, Cys-101–Cys-147, Cys-114–Cys-124, and Cys-131–Cys-173. The D/ECD-tripeptide signature appears at 41–43; it reads ECD. Ca(2+) is bound by residues Asp-43, Pro-44, Glu-46, Asp-58, and Val-59.

It belongs to the venom metalloproteinase (M12B) family. P-III subfamily. P-IIIa sub-subfamily. In terms of assembly, monomer. Zn(2+) is required as a cofactor. Glycosylated. Expressed by the venom gland.

The protein localises to the secreted. In terms of biological role, snake venom metalloproteinase that impairs hemostasis in the envenomed animal. In Crotalus scutulatus scutulatus (Mojave rattlesnake), this protein is Zinc metalloproteinase-disintegrin-like scutiarin.